Consider the following 406-residue polypeptide: Tryptophan synthase beta chain (406 aa).

K99 carries the post-translational modification N6-(pyridoxal phosphate)lysine.

It belongs to the TrpB family. Tetramer of two alpha and two beta chains. Pyridoxal 5'-phosphate is required as a cofactor.

The catalysed reaction is (1S,2R)-1-C-(indol-3-yl)glycerol 3-phosphate + L-serine = D-glyceraldehyde 3-phosphate + L-tryptophan + H2O. It participates in amino-acid biosynthesis; L-tryptophan biosynthesis; L-tryptophan from chorismate: step 5/5. Its function is as follows. The beta subunit is responsible for the synthesis of L-tryptophan from indole and L-serine. The protein is Tryptophan synthase beta chain of Brucella abortus (strain 2308).